The following is a 269-amino-acid chain: UPF0162 protein YchA (269 aa).

The protein belongs to the UPF0162 family.

This chain is UPF0162 protein YchA (ychA), found in Escherichia coli O157:H7.